Consider the following 256-residue polypeptide: DNA repair protein RecO (256 aa).

It belongs to the RecO family.

Involved in DNA repair and RecF pathway recombination. The chain is DNA repair protein RecO from Streptococcus pneumoniae serotype 19F (strain G54).